A 96-amino-acid chain; its full sequence is UPF0184 protein CG14818 (96 aa).

Disordered stretches follow at residues 1 to 28 (MSPK…LQEM) and 70 to 96 (IAEE…AAPK). Residues 8–21 (DPSSSGDSGNTNVQ) show a composition bias toward polar residues. The stretch at 21–77 (QEADLQEMEDVNNSLDALSCALDAVEQRTDDIMSQLRELLNSNREIRRLIAEENDNA) forms a coiled coil. Acidic residues predominate over residues 72–85 (EENDNAPESGDDNM).

This sequence belongs to the UPF0184 (EST00098) family.

The polypeptide is UPF0184 protein CG14818 (Drosophila melanogaster (Fruit fly)).